The following is a 118-amino-acid chain: Diacylglycerol kinase (118 aa).

Glu-28 contacts a divalent metal cation. A run of 2 helical transmembrane segments spans residues 29–49 and 55–75; these read TAFR…FFLG and IILM…NSAV. The active-site Proton acceptor is Glu-69. Glu-76 is a binding site for a divalent metal cation. The helical transmembrane segment at 98–118 threads the bilayer; it reads SASVFIALCIVGIVWGGILFF.

Belongs to the bacterial diacylglycerol kinase family. Requires Mg(2+) as cofactor.

The protein resides in the cell inner membrane. It carries out the reaction a 1,2-diacyl-sn-glycerol + ATP = a 1,2-diacyl-sn-glycero-3-phosphate + ADP + H(+). Functionally, catalyzes the ATP-dependent phosphorylation of sn-l,2-diacylglycerol (DAG) to phosphatidic acid. Involved in the recycling of diacylglycerol produced as a by-product during membrane-derived oligosaccharide (MDO) biosynthesis. The protein is Diacylglycerol kinase (dgkA) of Haemophilus influenzae (strain ATCC 51907 / DSM 11121 / KW20 / Rd).